The chain runs to 231 residues: Platelet-activating factor acetylhydrolase IB subunit alpha1 (231 aa).

Residue S2 is modified to N-acetylserine. S2 carries the post-translational modification Phosphoserine. Catalysis depends on residues S47, D192, and H195.

The protein belongs to the 'GDSL' lipolytic enzyme family. Platelet-activating factor acetylhydrolase IB beta/gamma subunits subfamily. As to quaternary structure, forms a catalytic dimer which is either homodimer (alpha1/alpha1 homodimer) or heterodimer with PAFAH1B2 (alpha1/alpha2 heterodimer). Component of the cytosolic (PAF-AH (I)) heterotetrameric enzyme, which is composed of PAFAH1B1 (beta), PAFAH1B2 (alpha2) and PAFAH1B3 (alpha1) subunits. The catalytic activity of the enzyme resides in the alpha1 (PAFAH1B3) and alpha2 (PAFAH1B2) subunits, whereas the beta subunit (PAFAH1B1) has regulatory activity. Trimer formation is not essential for the catalytic activity. Interacts with VLDLR; this interaction may modulate the Reelin pathway. In the adult, expressed in brain, skeletal muscle, kidney, thymus, spleen, colon, testis, ovary and peripheral blood leukocytes. In the fetus, highest expression occurs in brain.

It is found in the cytoplasm. The enzyme catalyses a 1-O-alkyl-2-acetyl-sn-glycero-3-phosphocholine + H2O = a 1-O-alkyl-sn-glycero-3-phosphocholine + acetate + H(+). It carries out the reaction 1-O-hexadecyl-2-acetyl-sn-glycero-3-phosphocholine + H2O = 1-O-hexadecyl-sn-glycero-3-phosphocholine + acetate + H(+). The catalysed reaction is 1-O-hexadecyl-2-acetyl-sn-glycero-3-phosphate + H2O = 1-O-hexadecyl-sn-glycero-3-phosphate + acetate + H(+). Beta subunit (PAFAH1B1) inhibits the acetylhydrolase activity of the alpha1/alpha1 catalytic homodimer. Its function is as follows. Alpha1 catalytic subunit of the cytosolic type I platelet-activating factor (PAF) acetylhydrolase (PAF-AH (I)) heterotetrameric enzyme that catalyzes the hydrolyze of the acetyl group at the sn-2 position of PAF and its analogs and modulates the action of PAF. The activity and substrate specificity of PAF-AH (I) are affected by its subunit composition. Both alpha1/alpha1 homodimer (PAFAH1B3/PAFAH1B3 homodimer) and alpha1/alpha2 heterodimer(PAFAH1B3/PAFAH1B2 heterodimer) hydrolyze 1-O-alkyl-2-acetyl-sn-glycero-3-phosphoric acid (AAGPA) more efficiently than PAF, but they have little hydrolytic activity towards 1-O-alkyl-2-acetyl-sn-glycero-3-phosphorylethanolamine (AAGPE). Plays an important role during the development of brain. This chain is Platelet-activating factor acetylhydrolase IB subunit alpha1, found in Homo sapiens (Human).